We begin with the raw amino-acid sequence, 191 residues long: Putative manganese efflux pump MntP (191 aa).

6 consecutive transmembrane segments (helical) span residues 3 to 23 (PISILLIGFAMSTDAFAAAIG), 37 to 57 (LRAGIIFGVIEAITPIIGWLL), 65 to 85 (VEAFDHWIAFGLLGALGIHMI), 107 to 129 (WKLALTGFATSIDAMAVGIGLAF), 144 to 164 (CTLTMVTVGIMLGRVLGSMVG), and 169 to 189 (IIGGVILVIIGATILYEHLHG).

The protein belongs to the MntP (TC 9.B.29) family.

The protein localises to the cell inner membrane. In terms of biological role, probably functions as a manganese efflux pump. This chain is Putative manganese efflux pump MntP, found in Stenotrophomonas maltophilia (strain R551-3).